Here is a 652-residue protein sequence, read N- to C-terminus: Acetyl-coenzyme A synthetase (652 aa).

Residues 191-194 (RAGR), T311, and N335 contribute to the CoA site. Residues 387-389 (GEP), 411-416 (DTWWQT), D500, and R515 contribute to the ATP site. S523 contacts CoA. Residue R526 coordinates ATP. The Mg(2+) site is built by V537, H539, and I542. R584 serves as a coordination point for CoA. K609 is modified (N6-acetyllysine).

It belongs to the ATP-dependent AMP-binding enzyme family. Mg(2+) serves as cofactor. Acetylated. Deacetylation by the SIR2-homolog deacetylase activates the enzyme.

The enzyme catalyses acetate + ATP + CoA = acetyl-CoA + AMP + diphosphate. Catalyzes the conversion of acetate into acetyl-CoA (AcCoA), an essential intermediate at the junction of anabolic and catabolic pathways. Acs undergoes a two-step reaction. In the first half reaction, Acs combines acetate with ATP to form acetyl-adenylate (AcAMP) intermediate. In the second half reaction, it can then transfer the acetyl group from AcAMP to the sulfhydryl group of CoA, forming the product AcCoA. In terms of biological role, enables the cell to use acetate during aerobic growth to generate energy via the TCA cycle, and biosynthetic compounds via the glyoxylate shunt. Acetylates CheY, the response regulator involved in flagellar movement and chemotaxis. This Escherichia coli O157:H7 protein is Acetyl-coenzyme A synthetase.